We begin with the raw amino-acid sequence, 117 residues long: Gamma-aminobutyric acid receptor-associated protein-like 1 (117 aa).

Residue G116 is the site of Phosphatidylethanolamine amidated glycine; alternate attachment. A lipid anchor (Phosphatidylserine amidated glycine; alternate) is attached at G116. A propeptide (removed in mature form) is located at residue K117.

Belongs to the ATG8 family. In terms of assembly, interacts with ATG13, OPRK1, RB1CC1 and ULK1. Interacts with TP53INP1 and TP53INP2. Directly interacts with SQSTM1. Interacts with ATG3, ATG7 and MAP15. Interacts with TECPR2. Interacts with TBC1D5. Interacts with MAPK15. Interacts with TRIM5. Interacts with MEFV and TRIM21. Interacts with WDFY3. Interacts with the reticulophagy receptor TEX264. Interacts with UBA5. Interacts with KBTBD6 and KBTBD7; the interaction is direct. Interacts with reticulophagy regulators RETREG1, RETREG2 and RETREG3. Interacts with IRGM. Interacts with DNM2. Interacts with NCOA4 (via C-terminus). In terms of processing, the precursor molecule is cleaved by ATG4 (ATG4A, ATG4B, ATG4C or ATG4D) to expose the glycine at the C-terminus and form the cytosolic form, GABARAPL1-I. The processed form is then activated by APG7L/ATG7, transferred to ATG3 and conjugated to phosphatidylethanolamine (PE) phospholipid to form the membrane-bound form, GABARAPL1-II. During non-canonical autophagy, the processed form is conjugated to phosphatidylserine (PS) phospholipid. ATG4 proteins also mediate the delipidation of PE-conjugated forms required for GABARAPL1 recycling when autophagosomes fuse with lysosomes. In addition, ATG4B and ATG4D mediate delipidation of ATG8 proteins conjugated to PS during non-canonical autophagy. ATG4B constitutes the major protein for proteolytic activation. ATG4D is the main enzyme for delipidation activity.

It localises to the cytoplasmic vesicle. Its subcellular location is the autophagosome. The protein localises to the cytoplasmic vesicle membrane. It is found in the cytoplasm. The protein resides in the cytoskeleton. It localises to the endoplasmic reticulum. Its subcellular location is the golgi apparatus. Ubiquitin-like modifier that increases cell-surface expression of kappa-type opioid receptor through facilitating anterograde intracellular trafficking of the receptor. Involved in formation of autophagosomal vacuoles. While LC3s are involved in elongation of the phagophore membrane, the GABARAP/GATE-16 subfamily is essential for a later stage in autophagosome maturation. Through its interaction with the reticulophagy receptor TEX264, participates in the remodeling of subdomains of the endoplasmic reticulum into autophagosomes upon nutrient stress, which then fuse with lysosomes for endoplasmic reticulum turnover. This Pongo abelii (Sumatran orangutan) protein is Gamma-aminobutyric acid receptor-associated protein-like 1.